Consider the following 280-residue polypeptide: Putative aquaporin-10 (280 aa).

The Cytoplasmic segment spans residues 1-8; that stretch reads MEAVSSEY. Residues 9-29 traverse the membrane as a helical segment; sequence YFPLYSALGYFALVFGIGEIA. Topologically, residues 30 to 64 are extracellular; that stretch reads RIITAKYVSPRGNSQLFLYELIGTIQMCTCVYENG. The chain crosses the membrane as a helical span at residues 65 to 85; sequence IIFKNYGFPAIFICVALLLTA. The Cytoplasmic segment spans residues 86–114; it reads GNIFNRGAMTNCAPIFEQFVFGNLGSSKF. Residues 115-135 traverse the membrane as a helical segment; it reads LTILSAQLIGATFASKFAYLI. The Extracellular segment spans residues 136-164; the sequence is WNITAPYSTAHLENASNLECILHYKQTAG. The helical transmembrane segment at 165-185 threads the bilayer; sequence IVIGFEIVGAFVVRIVVAQLL. Topologically, residues 186-193 are cytoplasmic; it reads ARPALIKL. The helical transmembrane segment at 194–214 threads the bilayer; it reads IPFAISAYLSLALYVVGVPGL. Over 215 to 233 the chain is Extracellular; the sequence is NPIVATARLYGCRGIDNSS. The helical transmembrane segment at 234–254 threads the bilayer; the sequence is FFILYWFCPVLGWLTGAYVVG. Residues 255-280 lie on the Cytoplasmic side of the membrane; sequence QKSPSKKSAKDVKAEKKAKAAAKKSD. The interval 256-280 is disordered; sequence KSPSKKSAKDVKAEKKAKAAAKKSD. Positions 262–280 are enriched in basic and acidic residues; the sequence is SAKDVKAEKKAKAAAKKSD.

It belongs to the MIP/aquaporin (TC 1.A.8) family.

The protein localises to the membrane. The sequence is that of Putative aquaporin-10 (aqp-10) from Caenorhabditis elegans.